A 166-amino-acid polypeptide reads, in one-letter code: Olee1-like protein (166 aa).

Positions 1–23 (MAKSIIIQAPALCFLSLLGFAYS) are cleaved as a signal peptide. Cystine bridges form between cysteine 35–cysteine 106, cysteine 38–cysteine 150, and cysteine 59–cysteine 94.

It belongs to the Ole e I family.

The protein localises to the secreted. This Betula pendula (European white birch) protein is Olee1-like protein.